Reading from the N-terminus, the 166-residue chain is Regulatory protein RecX (166 aa).

This sequence belongs to the RecX family.

It is found in the cytoplasm. Modulates RecA activity. The polypeptide is Regulatory protein RecX (Salmonella arizonae (strain ATCC BAA-731 / CDC346-86 / RSK2980)).